The chain runs to 278 residues: Potassium/proton antiporter CemA (278 aa).

Transmembrane regions (helical) follow at residues 60–80, 163–183, 201–221, and 239–259; these read YLVL…SLVF, ILAF…IAVL, FLII…GWEV, and IFLF…YWIF.

This sequence belongs to the CemA family.

Its subcellular location is the plastid. It is found in the chloroplast inner membrane. The catalysed reaction is K(+)(in) + H(+)(out) = K(+)(out) + H(+)(in). In terms of biological role, contributes to K(+)/H(+) antiport activity by supporting proton efflux to control proton extrusion and homeostasis in chloroplasts in a light-dependent manner to modulate photosynthesis. Prevents excessive induction of non-photochemical quenching (NPQ) under continuous-light conditions. Indirectly promotes efficient inorganic carbon uptake into chloroplasts. The chain is Potassium/proton antiporter CemA from Guillardia theta (Cryptophyte).